The chain runs to 715 residues: Transcription activator of gluconeogenesis MGYG_02011 (715 aa).

Positions 1–14 (MSPHQTTGQESDNM) are enriched in polar residues. A disordered region spans residues 1–28 (MSPHQTTGQESDNMAVNGENAPASSQYI). Positions 66 to 94 (CYACQRGHLTCGDERPCQRCIKRGFQDAC) form a DNA-binding region, zn(2)-C6 fungal-type. Polar residues-rich tracts occupy residues 129 to 166 (QNNVNGSNTSPGVPQQMTSPNFYSTQQSPDYNSFPQNK), 179 to 191 (YASQSPVSPTYQI), 203 to 223 (SLPQSASETPSTANAAPGQFN), and 362 to 385 (MMTTNSATFEDTTNSGAFSSRPNA). Disordered stretches follow at residues 129–223 (QNNV…GQFN), 354–414 (SPAS…RRRH), 534–569 (NHNVNTGGSSGLVTDSTSRGSYTPRPYSSDVYNSST), and 628–663 (GSNGEADAGQNGEASSSEANELNGSNANGATTNGRG). The segment covering 386–400 (SVSQQRQQPVVSTPQ) has biased composition (low complexity). Polar residues-rich tracts occupy residues 535 to 554 (HNVNTGGSSGLVTDSTSRGS) and 639 to 649 (GEASSSEANEL). Low complexity predominate over residues 650–662 (NGSNANGATTNGR).

Belongs to the ERT1/acuK family.

The protein localises to the nucleus. Transcription factor which regulates nonfermentable carbon utilization. Activator of gluconeogenetic genes. This is Transcription activator of gluconeogenesis MGYG_02011 from Arthroderma gypseum (strain ATCC MYA-4604 / CBS 118893) (Microsporum gypseum).